The following is a 351-amino-acid chain: UPF0252 protein MJECL39 (351 aa).

Helical transmembrane passes span 58-78 (FITF…VWLW) and 91-111 (IIIC…LCGV).

It belongs to the UPF0252 family.

It is found in the cell membrane. This is UPF0252 protein MJECL39 from Methanocaldococcus jannaschii (strain ATCC 43067 / DSM 2661 / JAL-1 / JCM 10045 / NBRC 100440) (Methanococcus jannaschii).